A 147-amino-acid chain; its full sequence is D-aminoacyl-tRNA deacylase (147 aa).

The Gly-cisPro motif, important for rejection of L-amino acids signature appears at 137 to 138 (GP).

This sequence belongs to the DTD family. Homodimer.

The protein resides in the cytoplasm. It carries out the reaction glycyl-tRNA(Ala) + H2O = tRNA(Ala) + glycine + H(+). The catalysed reaction is a D-aminoacyl-tRNA + H2O = a tRNA + a D-alpha-amino acid + H(+). An aminoacyl-tRNA editing enzyme that deacylates mischarged D-aminoacyl-tRNAs. Also deacylates mischarged glycyl-tRNA(Ala), protecting cells against glycine mischarging by AlaRS. Acts via tRNA-based rather than protein-based catalysis; rejects L-amino acids rather than detecting D-amino acids in the active site. By recycling D-aminoacyl-tRNA to D-amino acids and free tRNA molecules, this enzyme counteracts the toxicity associated with the formation of D-aminoacyl-tRNA entities in vivo and helps enforce protein L-homochirality. Upon expression in B.subtilis strain 168 confers resistance to D-Tyr and D-Asp, suggesting it acts on both of these amino acids. This is D-aminoacyl-tRNA deacylase from Bacillus amyloliquefaciens (Bacillus velezensis).